The sequence spans 85 residues: U4-theraphotoxin-Hhn1e (85 aa).

Residues 1–22 (MKVTLIAILTCAAVLVLHTTAA) form the signal peptide. Residues 23–48 (EELEAESQLMEVGMPDTELAAVDEER) constitute a propeptide that is removed on maturation. Cystine bridges form between Cys-52-Cys-66, Cys-56-Cys-77, and Cys-71-Cys-82.

Belongs to the neurotoxin 12 (Hwtx-2) family. 02 (Hwtx-2) subfamily. Expressed by the venom gland.

The protein localises to the secreted. Its function is as follows. Postsynaptic neurotoxin. This chain is U4-theraphotoxin-Hhn1e, found in Cyriopagopus hainanus (Chinese bird spider).